The primary structure comprises 679 residues: UvrABC system protein B (679 aa).

The Helicase ATP-binding domain maps to 25-412 (QGVNSGEEFQ…EGKFIEQVIR (388 aa)). 38–45 (GATGTGKT) serves as a coordination point for ATP. The short motif at 91–114 (YYDYYQPEAYVPVSDTYIAKTASI) is the Beta-hairpin element. The 155-residue stretch at 429–583 (QIDDLLSEIR…KKYNQINGIT (155 aa)) folds into the Helicase C-terminal domain. Positions 639–674 (PSLIDKLENKMKDAAKELNFEEAANLRDRIKKLRQK) constitute a UVR domain.

Belongs to the UvrB family. In terms of assembly, forms a heterotetramer with UvrA during the search for lesions. Interacts with UvrC in an incision complex.

The protein localises to the cytoplasm. In terms of biological role, the UvrABC repair system catalyzes the recognition and processing of DNA lesions. A damage recognition complex composed of 2 UvrA and 2 UvrB subunits scans DNA for abnormalities. Upon binding of the UvrA(2)B(2) complex to a putative damaged site, the DNA wraps around one UvrB monomer. DNA wrap is dependent on ATP binding by UvrB and probably causes local melting of the DNA helix, facilitating insertion of UvrB beta-hairpin between the DNA strands. Then UvrB probes one DNA strand for the presence of a lesion. If a lesion is found the UvrA subunits dissociate and the UvrB-DNA preincision complex is formed. This complex is subsequently bound by UvrC and the second UvrB is released. If no lesion is found, the DNA wraps around the other UvrB subunit that will check the other stand for damage. The chain is UvrABC system protein B from Prochlorococcus marinus subsp. pastoris (strain CCMP1986 / NIES-2087 / MED4).